A 142-amino-acid polypeptide reads, in one-letter code: Small heat shock protein IbpB (142 aa).

Residues 26 to 137 (AGESQSFPPY…AAQRIAISER (112 aa)) enclose the sHSP domain.

It belongs to the small heat shock protein (HSP20) family. Homodimer. Forms homomultimers of about 100-150 subunits at optimal growth temperatures. Conformation changes to oligomers at high temperatures or high ionic concentrations. The decrease in size of the multimers is accompanied by an increase in chaperone activity.

It localises to the cytoplasm. Its function is as follows. Associates with aggregated proteins, together with IbpA, to stabilize and protect them from irreversible denaturation and extensive proteolysis during heat shock and oxidative stress. Aggregated proteins bound to the IbpAB complex are more efficiently refolded and reactivated by the ATP-dependent chaperone systems ClpB and DnaK/DnaJ/GrpE. Its activity is ATP-independent. The sequence is that of Small heat shock protein IbpB from Shigella flexneri serotype 5b (strain 8401).